Here is a 166-residue protein sequence, read N- to C-terminus: NADPH-dependent 7-cyano-7-deazaguanine reductase (166 aa).

Cysteine 57 serves as the catalytic Thioimide intermediate. Aspartate 64 functions as the Proton donor in the catalytic mechanism. Substrate contacts are provided by residues 79–81 (VES) and 98–99 (HE).

Belongs to the GTP cyclohydrolase I family. QueF type 1 subfamily.

It localises to the cytoplasm. It carries out the reaction 7-aminomethyl-7-carbaguanine + 2 NADP(+) = 7-cyano-7-deazaguanine + 2 NADPH + 3 H(+). Its pathway is tRNA modification; tRNA-queuosine biosynthesis. In terms of biological role, catalyzes the NADPH-dependent reduction of 7-cyano-7-deazaguanine (preQ0) to 7-aminomethyl-7-deazaguanine (preQ1). The sequence is that of NADPH-dependent 7-cyano-7-deazaguanine reductase from Alkaliphilus metalliredigens (strain QYMF).